The sequence spans 77 residues: Sec-independent protein translocase protein TatA (77 aa).

A helical transmembrane segment spans residues 1-21 (MGGLSIWHWLIVLLIVALVFG). The segment at 43–77 (MKESEAPADAQQLPRSGSVNVDAKDAARSSDSNKA) is disordered. Residues 64–77 (DAKDAARSSDSNKA) show a composition bias toward basic and acidic residues.

Belongs to the TatA/E family. As to quaternary structure, the Tat system comprises two distinct complexes: a TatABC complex, containing multiple copies of TatA, TatB and TatC subunits, and a separate TatA complex, containing only TatA subunits. Substrates initially bind to the TatABC complex, which probably triggers association of the separate TatA complex to form the active translocon.

Its subcellular location is the cell inner membrane. Functionally, part of the twin-arginine translocation (Tat) system that transports large folded proteins containing a characteristic twin-arginine motif in their signal peptide across membranes. TatA could form the protein-conducting channel of the Tat system. This is Sec-independent protein translocase protein TatA from Burkholderia mallei (strain NCTC 10247).